The chain runs to 547 residues: Probable high-affinity hexose transporter ght8, mitochondrial (547 aa).

A mitochondrion-targeting transit peptide spans 1 to 21 (MGKTLTIVMLVFVSMAGWMFG). The Mitochondrial intermembrane segment spans residues 22–86 (ADTGSIGGIT…SPLMDRIGKR (65 aa)). The chain crosses the membrane as a helical span at residues 87 to 107 (VSIMFWTIVYLIGIILQVTAV). Residues 108–112 (PSWVQ) are Cytoplasmic-facing. A helical transmembrane segment spans residues 113–133 (IMVAKIWTGLAIGALSVLAPG). The Mitochondrial intermembrane portion of the chain corresponds to 134–144 (FQSEVAPATLR). The helical transmembrane segment at 145-165 (GTIVTTYQLAVTGGIFIAACI) threads the bilayer. At 166–179 (NMGTHKLHKTAQWR) the chain is on the cytoplasmic side. The helical transmembrane segment at 180-200 (VSMGINLLWGIIMFIGISFLP) threads the bilayer. At 201 to 304 (ESPRYLIAIG…TGMNSPYLSA (104 aa)) the chain is on the mitochondrial intermembrane side. Residues 305–325 (LILDAVNFGCTFGGLFVLEFF) form a helical membrane-spanning segment. Residues 326-328 (GRR) lie on the Cytoplasmic side of the membrane. A helical membrane pass occupies residues 329-349 (MPLIIGGVWQSITFFIYAAVG). Residues 350–363 (NRALTRKNGTSNHR) lie on the Mitochondrial intermembrane side of the membrane. Residues 364 to 384 (AGAVMIVFSCLFIFSFAQTWG) traverse the membrane as a helical segment. At 385–404 (PAAYVIVGESYPIRYRSKCA) the chain is on the cytoplasmic side. The helical transmembrane segment at 405–425 (AVATTGNWLWGFLITFFTPFI) threads the bilayer. Topologically, residues 426 to 432 (SDSIGFK) are mitochondrial intermembrane. Residues 433–453 (YGYIFAACNLCAACIIFLFAH) form a helical membrane-spanning segment. Over 454-547 (ETKGLTLEEI…NYVDEQDRYA (94 aa)) the chain is Cytoplasmic. Positions 482–547 (GQAAKQQQEV…NYVDEQDRYA (66 aa)) are disordered. The span at 517-529 (TSSNDITSSTSSS) shows a compositional bias: low complexity. A Phosphoserine modification is found at serine 519. Threonine 523 and threonine 526 each carry phosphothreonine. 4 positions are modified to phosphoserine: serine 527, serine 528, serine 529, and serine 537.

This sequence belongs to the major facilitator superfamily. Sugar transporter (TC 2.A.1.1) family.

The protein localises to the mitochondrion membrane. This Schizosaccharomyces pombe (strain 972 / ATCC 24843) (Fission yeast) protein is Probable high-affinity hexose transporter ght8, mitochondrial (ght8).